Consider the following 334-residue polypeptide: Glyceraldehyde-3-phosphate dehydrogenase (334 aa).

Residues 11–12 (RI), Asp-33, and Ser-119 contribute to the NAD(+) site. D-glyceraldehyde 3-phosphate is bound by residues 149-151 (SCT) and Thr-180. Cys-150 acts as the Nucleophile in catalysis. Asn-181 contacts NAD(+). D-glyceraldehyde 3-phosphate contacts are provided by residues Arg-197, 210-211 (TG), and Arg-233. Asn-314 serves as a coordination point for NAD(+).

This sequence belongs to the glyceraldehyde-3-phosphate dehydrogenase family. In terms of assembly, homotetramer.

It is found in the cytoplasm. The enzyme catalyses D-glyceraldehyde 3-phosphate + phosphate + NAD(+) = (2R)-3-phospho-glyceroyl phosphate + NADH + H(+). It participates in carbohydrate degradation; glycolysis; pyruvate from D-glyceraldehyde 3-phosphate: step 1/5. In terms of biological role, catalyzes the oxidative phosphorylation of glyceraldehyde 3-phosphate (G3P) to 1,3-bisphosphoglycerate (BPG) using the cofactor NAD. The first reaction step involves the formation of a hemiacetal intermediate between G3P and a cysteine residue, and this hemiacetal intermediate is then oxidized to a thioester, with concomitant reduction of NAD to NADH. The reduced NADH is then exchanged with the second NAD, and the thioester is attacked by a nucleophilic inorganic phosphate to produce BPG. The polypeptide is Glyceraldehyde-3-phosphate dehydrogenase (gap) (Clostridium acetobutylicum (strain ATCC 824 / DSM 792 / JCM 1419 / IAM 19013 / LMG 5710 / NBRC 13948 / NRRL B-527 / VKM B-1787 / 2291 / W)).